Reading from the N-terminus, the 482-residue chain is Probable cytosol aminopeptidase (482 aa).

Lys-251 and Asp-256 together coordinate Mn(2+). Lys-263 is a catalytic residue. Residues Asp-274, Asp-333, and Glu-335 each coordinate Mn(2+). Residue Arg-337 is part of the active site.

It belongs to the peptidase M17 family. Mn(2+) is required as a cofactor.

It localises to the cytoplasm. The catalysed reaction is Release of an N-terminal amino acid, Xaa-|-Yaa-, in which Xaa is preferably Leu, but may be other amino acids including Pro although not Arg or Lys, and Yaa may be Pro. Amino acid amides and methyl esters are also readily hydrolyzed, but rates on arylamides are exceedingly low.. It carries out the reaction Release of an N-terminal amino acid, preferentially leucine, but not glutamic or aspartic acids.. In terms of biological role, presumably involved in the processing and regular turnover of intracellular proteins. Catalyzes the removal of unsubstituted N-terminal amino acids from various peptides. This chain is Probable cytosol aminopeptidase, found in Acinetobacter baumannii (strain AB307-0294).